We begin with the raw amino-acid sequence, 362 residues long: Phospho-N-acetylmuramoyl-pentapeptide-transferase (362 aa).

A run of 10 helical transmembrane segments spans residues 27–47 (VMAA…VIRW), 73–93 (TMGG…WGDL), 97–117 (YVWV…VDDW), 132–152 (WKYL…GLTA), 160–180 (LIVP…FVAL), 200–220 (GLAI…AYVA), 237–257 (AGEL…FLWF), 264–284 (VFMG…VAVV), 289–309 (IVLF…MVQV), and 339–359 (QVVV…LSTL).

Belongs to the glycosyltransferase 4 family. MraY subfamily. Mg(2+) is required as a cofactor.

The protein localises to the cell inner membrane. It catalyses the reaction UDP-N-acetyl-alpha-D-muramoyl-L-alanyl-gamma-D-glutamyl-meso-2,6-diaminopimeloyl-D-alanyl-D-alanine + di-trans,octa-cis-undecaprenyl phosphate = di-trans,octa-cis-undecaprenyl diphospho-N-acetyl-alpha-D-muramoyl-L-alanyl-D-glutamyl-meso-2,6-diaminopimeloyl-D-alanyl-D-alanine + UMP. Its pathway is cell wall biogenesis; peptidoglycan biosynthesis. In terms of biological role, catalyzes the initial step of the lipid cycle reactions in the biosynthesis of the cell wall peptidoglycan: transfers peptidoglycan precursor phospho-MurNAc-pentapeptide from UDP-MurNAc-pentapeptide onto the lipid carrier undecaprenyl phosphate, yielding undecaprenyl-pyrophosphoryl-MurNAc-pentapeptide, known as lipid I. The polypeptide is Phospho-N-acetylmuramoyl-pentapeptide-transferase (Aromatoleum aromaticum (strain DSM 19018 / LMG 30748 / EbN1) (Azoarcus sp. (strain EbN1))).